The chain runs to 689 residues: Solute carrier family 22 member 23 (689 aa).

Disordered stretches follow at residues 1–55 (MAID…PLPA) and 162–188 (TASW…GKGN). N-linked (GlcNAc...) asparagine glycosylation occurs at Asn-24. Over residues 165–177 (WGTTSNRSNSSDT) the composition is skewed to polar residues. A run of 2 helical transmembrane segments spans residues 229–249 (FSLL…ADWV) and 253–273 (PVLL…ALSV). Asn-274 is a glycosylation site (N-linked (GlcNAc...) asparagine). Helical transmembrane passes span 283 to 303 (FFEG…RIEL), 310 to 330 (FIIT…MPGL), 339 to 359 (VLQA…SIFP), 466 to 486 (TMAS…KFLG), 489 to 509 (GGLL…LGLL), 541 to 561 (IAFS…SVFF), 572 to 592 (CGGL…APII), and 601 to 621 (FLHH…ILLL).

This sequence belongs to the major facilitator (TC 2.A.1) superfamily. Organic cation transporter (TC 2.A.1.19) family.

The protein localises to the membrane. This is Solute carrier family 22 member 23 (Slc22a23) from Mus musculus (Mouse).